A 212-amino-acid chain; its full sequence is Acyl-homoserine-lactone synthase (212 aa).

This sequence belongs to the autoinducer synthase family.

The catalysed reaction is a fatty acyl-[ACP] + S-adenosyl-L-methionine = an N-acyl-L-homoserine lactone + S-methyl-5'-thioadenosine + holo-[ACP] + H(+). Functionally, required for the synthesis of autoinducer molecules which bind to RaiR and that are involved in the restriction of nodule number. The sequence is that of Acyl-homoserine-lactone synthase (raiI) from Rhizobium etli.